A 594-amino-acid chain; its full sequence is Probable translation initiation factor IF-2 (594 aa).

The 216-residue stretch at L11–E226 folds into the tr-type G domain. The tract at residues G20–T27 is G1. Residue G20–T27 coordinates GTP. Residues A45–H49 form a G2 region. The segment at D81–G84 is G3. GTP contacts are provided by residues D81–H85 and N135–D138. The G4 stretch occupies residues N135 to D138. Positions S203–R205 are G5.

It belongs to the TRAFAC class translation factor GTPase superfamily. Classic translation factor GTPase family. IF-2 subfamily.

In terms of biological role, function in general translation initiation by promoting the binding of the formylmethionine-tRNA to ribosomes. Seems to function along with eIF-2. The protein is Probable translation initiation factor IF-2 of Methanocella arvoryzae (strain DSM 22066 / NBRC 105507 / MRE50).